Here is a 591-residue protein sequence, read N- to C-terminus: Aspartate--tRNA(Asp/Asn) ligase (591 aa).

Glutamate 174 provides a ligand contact to L-aspartate. The interval 198–201 (QLFK) is aspartate. Arginine 220 is an L-aspartate binding site. Residues 220–222 (RDE) and glutamine 229 each bind ATP. Histidine 450 is a binding site for L-aspartate. Glutamate 483 is a binding site for ATP. Residue arginine 490 coordinates L-aspartate. An ATP-binding site is contributed by 535–538 (GLDR).

Belongs to the class-II aminoacyl-tRNA synthetase family. Type 1 subfamily. In terms of assembly, homodimer.

The protein resides in the cytoplasm. It catalyses the reaction tRNA(Asx) + L-aspartate + ATP = L-aspartyl-tRNA(Asx) + AMP + diphosphate. Its function is as follows. Aspartyl-tRNA synthetase with relaxed tRNA specificity since it is able to aspartylate not only its cognate tRNA(Asp) but also tRNA(Asn). Reaction proceeds in two steps: L-aspartate is first activated by ATP to form Asp-AMP and then transferred to the acceptor end of tRNA(Asp/Asn). This is Aspartate--tRNA(Asp/Asn) ligase from Pseudomonas putida (strain W619).